The sequence spans 121 residues: Small ribosomal subunit protein uS13 (121 aa).

Residues Val-97–Lys-121 are disordered. Basic residues predominate over residues Gln-100–Lys-121.

This sequence belongs to the universal ribosomal protein uS13 family. As to quaternary structure, part of the 30S ribosomal subunit. Forms a loose heterodimer with protein S19. Forms two bridges to the 50S subunit in the 70S ribosome.

Its function is as follows. Located at the top of the head of the 30S subunit, it contacts several helices of the 16S rRNA. In the 70S ribosome it contacts the 23S rRNA (bridge B1a) and protein L5 of the 50S subunit (bridge B1b), connecting the 2 subunits; these bridges are implicated in subunit movement. Contacts the tRNAs in the A and P-sites. The polypeptide is Small ribosomal subunit protein uS13 (Prochlorococcus marinus (strain NATL2A)).